The following is a 286-amino-acid chain: Cytochrome c oxidase subunit 3 (286 aa).

The next 8 membrane-spanning stretches (helical) occupy residues 13 to 33 (GVFL…GVVI), 40 to 60 (VGTF…CFLI), 85 to 105 (IIQY…VVFF), 133 to 153 (IILD…NIIL), 173 to 195 (LCRE…LLFI), 199 to 221 (VWEF…LFSI), 223 to 243 (TLHF…IFNI), and 253 to 273 (IVLI…WFFL).

Belongs to the cytochrome c oxidase subunit 3 family. Component of the cytochrome c oxidase (complex IV, CIV), a multisubunit enzyme composed of a catalytic core of 3 subunits and several supernumerary subunits. The complex exists as a monomer or a dimer and forms supercomplexes (SCs) in the inner mitochondrial membrane with ubiquinol-cytochrome c oxidoreductase (cytochrome b-c1 complex, complex III, CIII).

The protein localises to the mitochondrion inner membrane. The catalysed reaction is 4 Fe(II)-[cytochrome c] + O2 + 8 H(+)(in) = 4 Fe(III)-[cytochrome c] + 2 H2O + 4 H(+)(out). Functionally, component of the cytochrome c oxidase, the last enzyme in the mitochondrial electron transport chain which drives oxidative phosphorylation. The respiratory chain contains 3 multisubunit complexes succinate dehydrogenase (complex II, CII), ubiquinol-cytochrome c oxidoreductase (cytochrome b-c1 complex, complex III, CIII) and cytochrome c oxidase (complex IV, CIV), that cooperate to transfer electrons derived from NADH and succinate to molecular oxygen, creating an electrochemical gradient over the inner membrane that drives transmembrane transport and the ATP synthase. Cytochrome c oxidase is the component of the respiratory chain that catalyzes the reduction of oxygen to water. Electrons originating from reduced cytochrome c in the intermembrane space (IMS) are transferred via the dinuclear copper A center (CU(A)) of subunit 2 and heme A of subunit 1 to the active site in subunit 1, a binuclear center (BNC) formed by heme A3 and copper B (CU(B)). The BNC reduces molecular oxygen to 2 water molecules using 4 electrons from cytochrome c in the IMS and 4 protons from the mitochondrial matrix. The chain is Cytochrome c oxidase subunit 3 (COIII) from Trypanoplasma borreli.